Here is a 126-residue protein sequence, read N- to C-terminus: Aspartate 1-decarboxylase (126 aa).

The Schiff-base intermediate with substrate; via pyruvic acid role is filled by Ser25. Position 25 is a pyruvic acid (Ser) (Ser25). Position 57 (Thr57) interacts with substrate. The active-site Proton donor is the Tyr58. 73 to 75 (GAA) is a substrate binding site.

It belongs to the PanD family. In terms of assembly, heterooctamer of four alpha and four beta subunits. The cofactor is pyruvate. In terms of processing, is synthesized initially as an inactive proenzyme, which is activated by self-cleavage at a specific serine bond to produce a beta-subunit with a hydroxyl group at its C-terminus and an alpha-subunit with a pyruvoyl group at its N-terminus.

It localises to the cytoplasm. The catalysed reaction is L-aspartate + H(+) = beta-alanine + CO2. Its pathway is cofactor biosynthesis; (R)-pantothenate biosynthesis; beta-alanine from L-aspartate: step 1/1. In terms of biological role, catalyzes the pyruvoyl-dependent decarboxylation of aspartate to produce beta-alanine. The polypeptide is Aspartate 1-decarboxylase (Methylococcus capsulatus (strain ATCC 33009 / NCIMB 11132 / Bath)).